A 276-amino-acid polypeptide reads, in one-letter code: Formamidopyrimidine-DNA glycosylase (276 aa).

Catalysis depends on Pro-2, which acts as the Schiff-base intermediate with DNA. Glu-3 acts as the Proton donor in catalysis. Lys-58 serves as the catalytic Proton donor; for beta-elimination activity. 3 residues coordinate DNA: His-94, Arg-112, and Arg-157. An FPG-type zinc finger spans residues 242–276 (FVYDRAGLPCRVCGTPIKQIVQGQRSTYFCPTCQR). Arg-266 acts as the Proton donor; for delta-elimination activity in catalysis.

Belongs to the FPG family. As to quaternary structure, monomer. It depends on Zn(2+) as a cofactor.

It catalyses the reaction Hydrolysis of DNA containing ring-opened 7-methylguanine residues, releasing 2,6-diamino-4-hydroxy-5-(N-methyl)formamidopyrimidine.. The catalysed reaction is 2'-deoxyribonucleotide-(2'-deoxyribose 5'-phosphate)-2'-deoxyribonucleotide-DNA = a 3'-end 2'-deoxyribonucleotide-(2,3-dehydro-2,3-deoxyribose 5'-phosphate)-DNA + a 5'-end 5'-phospho-2'-deoxyribonucleoside-DNA + H(+). In terms of biological role, involved in base excision repair of DNA damaged by oxidation or by mutagenic agents. Acts as a DNA glycosylase that recognizes and removes damaged bases. Has a preference for oxidized purines, such as 7,8-dihydro-8-oxoguanine (8-oxoG). Has AP (apurinic/apyrimidinic) lyase activity and introduces nicks in the DNA strand. Cleaves the DNA backbone by beta-delta elimination to generate a single-strand break at the site of the removed base with both 3'- and 5'-phosphates. The protein is Formamidopyrimidine-DNA glycosylase of Paraburkholderia phytofirmans (strain DSM 17436 / LMG 22146 / PsJN) (Burkholderia phytofirmans).